A 573-amino-acid polypeptide reads, in one-letter code: Diflavin flavoprotein A 1 (573 aa).

The tract at residues 43-236 (QNGTTYNSYL…GTISTVANGH (194 aa)) is zinc metallo-hydrolase. Fe cation contacts are provided by His92, Glu94, Asp96, His159, Asp178, and His236. The region spanning 265-401 (VVVFYVADYG…LCDESGTDLG (137 aa)) is the Flavodoxin-like domain. The segment at 424–573 (IGRISGGLYI…VHHRKVGNYY (150 aa)) is flavodoxin-reductase-like.

The protein in the N-terminal section; belongs to the zinc metallo-hydrolase group 3 family. It in the C-terminal section; belongs to the flavodoxin reductase family. Homodimer. Requires Fe cation as cofactor. The cofactor is FAD. FMN serves as cofactor.

Functionally, mediates electron transfer from NADH to oxygen, reducing it to water. This modular protein has 3 redox cofactors, in other organisms the same activity requires 2 or 3 proteins. The polypeptide is Diflavin flavoprotein A 1 (dfa1) (Synechocystis sp. (strain ATCC 27184 / PCC 6803 / Kazusa)).